The following is a 111-amino-acid chain: Aspartate 1-decarboxylase (111 aa).

The Schiff-base intermediate with substrate; via pyruvic acid role is filled by Ser25. Ser25 is modified (pyruvic acid (Ser)). Substrate is bound at residue Thr57. Catalysis depends on Tyr58, which acts as the Proton donor. 73–75 (GPA) contacts substrate.

It belongs to the PanD family. In terms of assembly, heterooctamer of four alpha and four beta subunits. Pyruvate is required as a cofactor. Post-translationally, is synthesized initially as an inactive proenzyme, which is activated by self-cleavage at a specific serine bond to produce a beta-subunit with a hydroxyl group at its C-terminus and an alpha-subunit with a pyruvoyl group at its N-terminus.

Its subcellular location is the cytoplasm. It carries out the reaction L-aspartate + H(+) = beta-alanine + CO2. The protein operates within cofactor biosynthesis; (R)-pantothenate biosynthesis; beta-alanine from L-aspartate: step 1/1. Its function is as follows. Catalyzes the pyruvoyl-dependent decarboxylation of aspartate to produce beta-alanine. The polypeptide is Aspartate 1-decarboxylase (Francisella tularensis subsp. holarctica (strain LVS)).